The chain runs to 1247 residues: Structural polyprotein (1247 aa).

The segment at 36–67 is host transcription inhibition; sequence RPAGQLAQLISAVSRLALRTVPQKPRRTRKIK. Residues 53–103 form a disordered region; it reads LRTVPQKPRRTRKIKKQKQVKQEQQSTRNQKKKAPKQKQTQKKKRPGRRER. Basic residues-rich tracts occupy residues 59–71 and 81–100; these read KPRRTRKIKKQKQ and NQKKKAPKQKQTQKKKRPGR. A Nuclear localization signal motif is present at residues 60–98; that stretch reads PRRTRKIKKQKQVKQEQQSTRNQKKKAPKQKQTQKKKRP. Residues 83–113 are binding to the viral RNA; sequence KKKAPKQKQTQKKKRPGRRERMCMKIENDCI. Residues 98–112 form a ribosome-binding region; it reads PGRRERMCMKIENDC. A disulfide bond links cysteine 112 and cysteine 127. The 149-residue stretch at 112–260 folds into the Peptidase S3 domain; it reads CIFEVKHEGK…KITPEGSVEW (149 aa). The active-site Charge relay system is the histidine 138. A Nuclear export signal motif is present at residues 143-153; that stretch reads IDNADLAKLAF. Positions 154–159 are interaction with spike glycoprotein E2; the sequence is KRSSKY. Aspartate 160 serves as the catalytic Charge relay system. Positions 182-192 are dimerization of the capsid protein; the sequence is PEGYYNWHHGA. Catalysis depends on serine 212, which acts as the Charge relay system. Residues 218–222 are dimerization of the capsid protein; it reads DNKGR. The interval 261–273 is functions as an uncleaved signal peptide for the precursor of protein E3/E2; it reads SLALPVMCLLANT. 9 disulfides stabilise this stretch: cysteine 268–cysteine 277, cysteine 282–cysteine 286, cysteine 285–cysteine 317, cysteine 343–cysteine 449, cysteine 346–cysteine 352, cysteine 415–cysteine 429, cysteine 477–cysteine 590, cysteine 525–cysteine 549, and cysteine 527–cysteine 544. Residue asparagine 272 is glycosylated (N-linked (GlcNAc...) asparagine; by host). The Extracellular segment spans residues 325–691; that stretch reads NARENFNVYK…YYYELYPTTT (367 aa). Residue asparagine 587 is glycosylated (N-linked (GlcNAc...) asparagine; by host). The helical transmembrane segment at 692 to 712 threads the bilayer; it reads IAVLAAASIVVASLVGLSLGM. Topologically, residues 713 to 747 are cytoplasmic; sequence CICARRRCITPYELTPGATIPFLLGILCCVKTAKA. Positions 715-719 are interaction with the capsid protein; the sequence is CARRR. Residues cysteine 720, cysteine 740, and cysteine 741 are each lipidated (S-palmitoyl cysteine; by host). Residues 720-740 are transient transmembrane before p62-6K protein processing; that stretch reads CITPYELTPGATIPFLLGILC. An intrachain disulfide couples cysteine 720 to cysteine 741. The Extracellular portion of the chain corresponds to 748–762; that stretch reads ASYYEAATYLWNEQQ. The helical transmembrane segment at 763-783 threads the bilayer; that stretch reads PLFWLQLLIPLSAAIVVCNCL. Residues 784–787 are Cytoplasmic-facing; that stretch reads KLLP. Residues 788–808 form a helical membrane-spanning segment; the sequence is CCCKTLTFLAVMSIGARTVSA. The Extracellular segment spans residues 809–1223; it reads YEHATVIPNT…AMSWVQKITG (415 aa). Intrachain disulfides connect cysteine 857–cysteine 922, cysteine 870–cysteine 902, cysteine 871–cysteine 904, and cysteine 876–cysteine 886. Positions 892–909 are E1 fusion peptide loop; the sequence is VYPFMWGGAYCFCDAENT. N-linked (GlcNAc...) asparagine; by host glycosylation is found at asparagine 949 and asparagine 1078. 4 cysteine pairs are disulfide-bonded: cysteine 1067–cysteine 1079, cysteine 1109–cysteine 1184, cysteine 1114–cysteine 1188, and cysteine 1136–cysteine 1178. A helical transmembrane segment spans residues 1224–1244; it reads GVGLVVAIAALILIIVLCVSF. Residue cysteine 1241 is the site of S-palmitoyl cysteine; by host attachment. Topologically, residues 1245 to 1247 are cytoplasmic; sequence SRH.

Homodimer. Homomultimer. Interacts with host karyopherin KPNA4; this interaction allows the nuclear import of the viral capsid protein. Interacts with spike glycoprotein E2. Interacts with host IRAK1; the interaction leads to inhibition of IRAK1-dependent signaling. In terms of assembly, the precursor of protein E3/E2 and E1 form a heterodimer shortly after synthesis. As to quaternary structure, the precursor of protein E3/E2 and E1 form a heterodimer shortly after synthesis. Processing of the precursor of protein E3/E2 into E2 and E3 results in a heterodimer of the spike glycoproteins E2 and E1. Spike at virion surface are constituted of three E2-E1 heterodimers. After target cell attachment and endocytosis, E1 change conformation to form homotrimers. Interacts with 6K protein. Interacts with spike glycoprotein E1. Processing of the precursor of protein E3/E2 into E2 and E3 results in a heterodimer of the spike glycoproteins E2 and E1. Spike at virion surface are constituted of a trimer of E2-E1 heterodimers. Interacts with 6K protein. Interacts with host MXRA8; this interaction mediates virus entry. In terms of assembly, oligomer. Interacts with spike glycoprotein E1. Interacts with spike glycoprotein E2. Structural polyprotein: Specific enzymatic cleavages in vivo yield mature proteins. Capsid protein is auto-cleaved during polyprotein translation, unmasking a signal peptide at the N-terminus of the precursor of E3/E2. The remaining polyprotein is then targeted to the host endoplasmic reticulum, where host signal peptidase cleaves it into pE2, 6K and E1 proteins. pE2 is further processed to mature E3 and E2 by host furin in trans-Golgi vesicle. In terms of processing, palmitoylated via thioester bonds. These palmitoylations may induce disruption of the C-terminus transmembrane. This would result in the reorientation of E2 C-terminus from lumenal to cytoplasmic side. Post-translationally, N-glycosylated. Palmitoylated via thioester bonds.

It is found in the virion. It localises to the host cytoplasm. The protein resides in the host cell membrane. Its subcellular location is the host nucleus. The protein localises to the virion membrane. It is found in the host Golgi apparatus. It localises to the host trans-Golgi network. The protein resides in the host endoplasmic reticulum. The enzyme catalyses Autocatalytic release of the core protein from the N-terminus of the togavirus structural polyprotein by hydrolysis of a -Trp-|-Ser- bond.. Functionally, forms an icosahedral capsid with a T=4 symmetry composed of 240 copies of the capsid protein surrounded by a lipid membrane through which penetrate 80 spikes composed of trimers of E1-E2 heterodimers. The capsid protein binds to the viral RNA genome at a site adjacent to a ribosome binding site for viral genome translation following genome release. Possesses a protease activity that results in its autocatalytic cleavage from the nascent structural protein. Following its self-cleavage, the capsid protein transiently associates with ribosomes, and within several minutes the protein binds to viral RNA and rapidly assembles into icosahedric core particles. The resulting nucleocapsid eventually associates with the cytoplasmic domain of the spike glycoprotein E2 at the cell membrane, leading to budding and formation of mature virions. In case of infection, new virions attach to target cells and after clathrin-mediated endocytosis their membrane fuses with the host endosomal membrane. This leads to the release of the nucleocapsid into the cytoplasm, followed by an uncoating event necessary for the genomic RNA to become accessible. The uncoating might be triggered by the interaction of capsid proteins with ribosomes. Binding of ribosomes would release the genomic RNA since the same region is genomic RNA-binding and ribosome-binding. Specifically inhibits interleukin-1 receptor-associated kinase 1/IRAK1-dependent signaling during viral entry, representing a means by which the alphaviruses may evade innate immune detection and activation prior to viral gene expression. Provides the signal sequence for the translocation of the precursor of protein E3/E2 to the host endoplasmic reticulum. Furin-cleaved E3 remains associated with spike glycoprotein E1 and mediates pH protection of the latter during the transport via the secretory pathway. After virion release from the host cell, the assembly protein E3 is gradually released in the extracellular space. In terms of biological role, plays a role in viral attachment to target host cell, by binding to the cell receptor MXRA8. Synthesized as a p62 precursor which is processed by furin at the cell membrane just before virion budding, giving rise to E2-E1 heterodimer. The p62-E1 heterodimer is stable, whereas E2-E1 is unstable and dissociate at low pH. p62 is processed at the last step, presumably to avoid E1 fusion activation before its final export to cell surface. E2 C-terminus contains a transitory transmembrane that would be disrupted by palmitoylation, resulting in reorientation of the C-terminal tail from lumenal to cytoplasmic side. This step is critical since E2 C-terminus is involved in budding by interacting with capsid proteins. This release of E2 C-terminus in cytoplasm occurs lately in protein export, and precludes premature assembly of particles at the endoplasmic reticulum membrane. Its function is as follows. Acts as a viroporin that participates in virus glycoprotein processing and transport to the plasma membrane, cell permeabilization and budding of viral particles. Disrupts the calcium homeostasis of the cell, probably at the endoplasmic reticulum level. This leads to cytoplasmic calcium elevation. Because of its lipophilic properties, the 6K protein is postulated to influence the selection of lipids that interact with the transmembrane domains of the glycoproteins, which, in turn, affects the deformability of the bilayer required for the extreme curvature that occurs as budding proceeds. Present in low amount in virions, about 3% compared to viral glycoproteins. Functionally, class II viral fusion protein. Fusion activity is inactive as long as E1 is bound to E2 in mature virion. After virus attachment to target cell via host MXRA8 and endocytosis, acidification of the endosome induce dissociation of E1/E2 heterodimer and concomitant trimerization of the E1 subunits. This E1 trimer is fusion active, and promotes release of viral nucleocapsid in cytoplasm after endosome and viral membrane fusion. Efficient fusion requires the presence of cholesterol and sphingolipid in the target membrane. In Anopheles (Human), this protein is Structural polyprotein.